Here is an 807-residue protein sequence, read N- to C-terminus: Glycerol-3-phosphate acyltransferase (807 aa).

An HXXXXD motif motif is present at residues 306 to 311 (HRSHMD).

The protein belongs to the GPAT/DAPAT family.

Its subcellular location is the cell inner membrane. It carries out the reaction sn-glycerol 3-phosphate + an acyl-CoA = a 1-acyl-sn-glycero-3-phosphate + CoA. It participates in phospholipid metabolism; CDP-diacylglycerol biosynthesis; CDP-diacylglycerol from sn-glycerol 3-phosphate: step 1/3. The sequence is that of Glycerol-3-phosphate acyltransferase (plsB) from Escherichia coli O157:H7.